We begin with the raw amino-acid sequence, 192 residues long: Putative BTB/POZ domain-containing protein At4g04090 (192 aa).

Positions 23–96 (VDVRLMARDS…TYSDGSMLSE (74 aa)) constitute a BTB domain.

The protein operates within protein modification; protein ubiquitination. Its function is as follows. May act as a substrate-specific adapter of an E3 ubiquitin-protein ligase complex (CUL3-RBX1-BTB) which mediates the ubiquitination and subsequent proteasomal degradation of target proteins. The chain is Putative BTB/POZ domain-containing protein At4g04090 from Arabidopsis thaliana (Mouse-ear cress).